A 557-amino-acid polypeptide reads, in one-letter code: Dihydroxy-acid dehydratase (557 aa).

Cysteine 49 serves as a coordination point for [2Fe-2S] cluster. A Mg(2+)-binding site is contributed by aspartate 81. Position 122 (cysteine 122) interacts with [2Fe-2S] cluster. Positions 123 and 124 each coordinate Mg(2+). An N6-carboxylysine modification is found at lysine 124. Cysteine 194 provides a ligand contact to [2Fe-2S] cluster. Residue glutamate 446 coordinates Mg(2+). Catalysis depends on serine 472, which acts as the Proton acceptor.

Belongs to the IlvD/Edd family. In terms of assembly, homodimer. Requires [2Fe-2S] cluster as cofactor. Mg(2+) serves as cofactor.

The enzyme catalyses (2R)-2,3-dihydroxy-3-methylbutanoate = 3-methyl-2-oxobutanoate + H2O. It catalyses the reaction (2R,3R)-2,3-dihydroxy-3-methylpentanoate = (S)-3-methyl-2-oxopentanoate + H2O. It participates in amino-acid biosynthesis; L-isoleucine biosynthesis; L-isoleucine from 2-oxobutanoate: step 3/4. Its pathway is amino-acid biosynthesis; L-valine biosynthesis; L-valine from pyruvate: step 3/4. Functions in the biosynthesis of branched-chain amino acids. Catalyzes the dehydration of (2R,3R)-2,3-dihydroxy-3-methylpentanoate (2,3-dihydroxy-3-methylvalerate) into 2-oxo-3-methylpentanoate (2-oxo-3-methylvalerate) and of (2R)-2,3-dihydroxy-3-methylbutanoate (2,3-dihydroxyisovalerate) into 2-oxo-3-methylbutanoate (2-oxoisovalerate), the penultimate precursor to L-isoleucine and L-valine, respectively. This chain is Dihydroxy-acid dehydratase, found in Prochlorococcus marinus (strain MIT 9312).